The following is a 232-amino-acid chain: Cytidylate kinase (232 aa).

Residue Gly19–Thr27 coordinates ATP.

Belongs to the cytidylate kinase family. Type 1 subfamily.

It localises to the cytoplasm. The enzyme catalyses CMP + ATP = CDP + ADP. It catalyses the reaction dCMP + ATP = dCDP + ADP. This Nitratidesulfovibrio vulgaris (strain ATCC 29579 / DSM 644 / CCUG 34227 / NCIMB 8303 / VKM B-1760 / Hildenborough) (Desulfovibrio vulgaris) protein is Cytidylate kinase.